The chain runs to 231 residues: Large ribosomal subunit protein uL1 (231 aa).

The protein belongs to the universal ribosomal protein uL1 family. Part of the 50S ribosomal subunit.

Functionally, binds directly to 23S rRNA. The L1 stalk is quite mobile in the ribosome, and is involved in E site tRNA release. Its function is as follows. Protein L1 is also a translational repressor protein, it controls the translation of the L11 operon by binding to its mRNA. In Cellvibrio japonicus (strain Ueda107) (Pseudomonas fluorescens subsp. cellulosa), this protein is Large ribosomal subunit protein uL1.